The following is a 441-amino-acid chain: Endoglucanase E-2 (441 aa).

Residues 1–31 constitute a signal peptide (tat-type signal); sequence MSPRPLRALLGAAAAALVSAAALAFPSQAAA. The catalytic stretch occupies residues 32-320; it reads NDSPFYVNPN…YEMAIAAGGT (289 aa). The active site involves Asp110. 2 cysteine pairs are disulfide-bonded: Cys111–Cys156 and Cys263–Cys298. Asp148 (proton donor) is an active-site residue. Catalysis depends on Asp296, which acts as the Nucleophile. Residues 317 to 343 form a disordered region; that stretch reads AGGTNPNPNPNPTPTPTPTPTPPPGSS. The interval 321-340 is linker; that stretch reads NPNPNPNPTPTPTPTPTPPP. Positions 323–341 are enriched in pro residues; sequence NPNPNPTPTPTPTPTPPPG. The region spanning 339–441 is the CBM2 domain; sequence PPGSSGACTA…SVPTLTCAAS (103 aa). The cysteines at positions 346 and 438 are disulfide-linked.

Belongs to the glycosyl hydrolase 6 (cellulase B) family. As to quaternary structure, homodimer. Predicted to be exported by the Tat system. The position of the signal peptide cleavage has been experimentally proven.

It carries out the reaction Endohydrolysis of (1-&gt;4)-beta-D-glucosidic linkages in cellulose, lichenin and cereal beta-D-glucans.. The protein operates within glycan metabolism; cellulose degradation. The chain is Endoglucanase E-2 (celB) from Thermobifida fusca (Thermomonospora fusca).